The sequence spans 349 residues: GDSL esterase/lipase At2g19050 (349 aa).

The signal sequence occupies residues 1 to 23 (MAEAIFKALLLVIATTAFATTEA). The active-site Nucleophile is Ser38. The N-linked (GlcNAc...) asparagine glycan is linked to Asn49. Residues Asp316 and His319 contribute to the active site.

Belongs to the 'GDSL' lipolytic enzyme family.

It is found in the secreted. This is GDSL esterase/lipase At2g19050 from Arabidopsis thaliana (Mouse-ear cress).